The sequence spans 249 residues: Probable transcriptional regulatory protein Strop_1792 (249 aa).

Belongs to the TACO1 family.

Its subcellular location is the cytoplasm. This is Probable transcriptional regulatory protein Strop_1792 from Salinispora tropica (strain ATCC BAA-916 / DSM 44818 / JCM 13857 / NBRC 105044 / CNB-440).